The chain runs to 313 residues: Pyrimidine-specific ribonucleoside hydrolase RihA (313 aa).

Residue H240 is part of the active site.

The protein belongs to the IUNH family. RihA subfamily.

Functionally, hydrolyzes cytidine or uridine to ribose and cytosine or uracil, respectively. The protein is Pyrimidine-specific ribonucleoside hydrolase RihA of Enterobacter sp. (strain 638).